A 310-amino-acid polypeptide reads, in one-letter code: Protein N-terminal asparagine amidohydrolase (310 aa).

Monomer.

The protein localises to the cytoplasm. It catalyses the reaction N-terminal L-asparaginyl-[protein] + H2O + H(+) = N-terminal L-aspartyl-[protein] + NH4(+). Functionally, N-terminal asparagine deamidase that mediates deamidation of N-terminal asparagine residues to aspartate. Required for the ubiquitin-dependent turnover of intracellular proteins that initiate with Met-Asn. These proteins are acetylated on the retained initiator methionine and can subsequently be modified by the removal of N-acetyl methionine by acylaminoacid hydrolase (AAH). Conversion of the resulting N-terminal asparagine to aspartate by NTAN1/PNAD renders the protein susceptible to arginylation, polyubiquitination and degradation as specified by the N-end rule. This enzyme does not act on substrates with internal or C-terminal asparagines and does not act on glutamine residues in any position. The polypeptide is Protein N-terminal asparagine amidohydrolase (Mus musculus (Mouse)).